The following is a 128-amino-acid chain: Small ribosomal subunit protein eS8 (128 aa).

Belongs to the eukaryotic ribosomal protein eS8 family. Part of the 30S ribosomal subunit.

The polypeptide is Small ribosomal subunit protein eS8 (Methanococcus maripaludis (strain C5 / ATCC BAA-1333)).